Here is a 219-residue protein sequence, read N- to C-terminus: uncharacterized protein (219 aa).

This sequence belongs to the CIA30 family.

It is found in the cytoplasm. It localises to the nucleus. This is an uncharacterized protein from Schizosaccharomyces pombe (strain 972 / ATCC 24843) (Fission yeast).